The chain runs to 175 residues: Di-N-acetylchitobiase (175 aa).

The signal sequence occupies residues 1–38 (MARLQLAGSRRLVPLPRRAPRLAPLLLPLLLALPDGAR). One can recognise a GH18 domain in the interval 39–175 (ADCPCKVPAL…SFHHEIKGSQ (137 aa)). The N-linked (GlcNAc...) asparagine glycan is linked to asparagine 115. Glutamate 143 (proton donor) is an active-site residue.

It belongs to the glycosyl hydrolase 18 family.

The protein localises to the lysosome. Functionally, involved in the degradation of asparagine-linked glycoproteins. Hydrolyze of N-acetyl-beta-D-glucosamine (1-4)N-acetylglucosamine chitobiose core from the reducing end of the bond, it requires prior cleavage by glycosylasparaginase. The chain is Di-N-acetylchitobiase (CTBS) from Bos taurus (Bovine).